A 417-amino-acid polypeptide reads, in one-letter code: NADH-quinone oxidoreductase subunit D (417 aa).

It belongs to the complex I 49 kDa subunit family. NDH-1 is composed of 14 different subunits. Subunits NuoB, C, D, E, F, and G constitute the peripheral sector of the complex.

The protein localises to the cell inner membrane. The catalysed reaction is a quinone + NADH + 5 H(+)(in) = a quinol + NAD(+) + 4 H(+)(out). Functionally, NDH-1 shuttles electrons from NADH, via FMN and iron-sulfur (Fe-S) centers, to quinones in the respiratory chain. The immediate electron acceptor for the enzyme in this species is believed to be ubiquinone. Couples the redox reaction to proton translocation (for every two electrons transferred, four hydrogen ions are translocated across the cytoplasmic membrane), and thus conserves the redox energy in a proton gradient. This Burkholderia orbicola (strain MC0-3) protein is NADH-quinone oxidoreductase subunit D.